We begin with the raw amino-acid sequence, 315 residues long: Cyclin-dependent kinase B2-2 (315 aa).

Residues 16–306 (FEKLEKVGEG…AKKAMEHPYF (291 aa)) form the Protein kinase domain. Residues 22–30 (VGEGTYGKV) and K45 contribute to the ATP site. A Phosphotyrosine modification is found at Y27. The Proton acceptor role is filled by D147. T181 carries the phosphothreonine modification.

This sequence belongs to the protein kinase superfamily. CMGC Ser/Thr protein kinase family. CDC2/CDKX subfamily. Expressed in flowers.

It catalyses the reaction L-seryl-[protein] + ATP = O-phospho-L-seryl-[protein] + ADP + H(+). The enzyme catalyses L-threonyl-[protein] + ATP = O-phospho-L-threonyl-[protein] + ADP + H(+). The catalysed reaction is [DNA-directed RNA polymerase] + ATP = phospho-[DNA-directed RNA polymerase] + ADP + H(+). In Arabidopsis thaliana (Mouse-ear cress), this protein is Cyclin-dependent kinase B2-2 (CDKB2-2).